The primary structure comprises 245 residues: 1-(5-phosphoribosyl)-5-[(5-phosphoribosylamino)methylideneamino] imidazole-4-carboxamide isomerase (245 aa).

The active-site Proton acceptor is Asp-7. The active-site Proton donor is the Asp-129.

The protein belongs to the HisA/HisF family.

It is found in the cytoplasm. The enzyme catalyses 1-(5-phospho-beta-D-ribosyl)-5-[(5-phospho-beta-D-ribosylamino)methylideneamino]imidazole-4-carboxamide = 5-[(5-phospho-1-deoxy-D-ribulos-1-ylimino)methylamino]-1-(5-phospho-beta-D-ribosyl)imidazole-4-carboxamide. Its pathway is amino-acid biosynthesis; L-histidine biosynthesis; L-histidine from 5-phospho-alpha-D-ribose 1-diphosphate: step 4/9. This chain is 1-(5-phosphoribosyl)-5-[(5-phosphoribosylamino)methylideneamino] imidazole-4-carboxamide isomerase, found in Serratia proteamaculans (strain 568).